The chain runs to 139 residues: Protein GOS9 (139 aa).

The region spanning 5–139 (LVKIGTWGGN…VDSIGVYVHI (135 aa)) is the Jacalin-type lectin domain.

In terms of tissue distribution, expressed mainly in roots.

The polypeptide is Protein GOS9 (GOS9) (Oryza sativa subsp. indica (Rice)).